The chain runs to 301 residues: MEQLVNELIEANVGRVLVDEPLARYTTMKIGGPADILIVPKHVAGIEKTLQLVKKYKTKWTVIGRGSNLLVSDLGIEGVVIRLGEGLDHLEVEKHRVRVGGGYPLIKLSTLLSRQGLAGLEFASGIPGSVGGAVYMNAGAHKSDISNILSKALILFEDGTIDWLTHGEMGFSYRTSVLQTKRPGIVLEAEFQLQIGERERIVSVMQKNKDYRRETQPWNHPCAGSVFRNPTPYFAGDLIEKAGLRGYQIGGAQISEMHGNFIINTGGASAQDVLSLIALIKQTIKDKFGVEMHTEVEIIGR.

Residues 29–196 (KIGGPADILI…LEAEFQLQIG (168 aa)) form the FAD-binding PCMH-type domain. Residue R174 is part of the active site. The Proton donor role is filled by S225. E295 is a catalytic residue.

This sequence belongs to the MurB family. It depends on FAD as a cofactor.

Its subcellular location is the cytoplasm. It carries out the reaction UDP-N-acetyl-alpha-D-muramate + NADP(+) = UDP-N-acetyl-3-O-(1-carboxyvinyl)-alpha-D-glucosamine + NADPH + H(+). The protein operates within cell wall biogenesis; peptidoglycan biosynthesis. Functionally, cell wall formation. This Bacillus thuringiensis subsp. konkukian (strain 97-27) protein is UDP-N-acetylenolpyruvoylglucosamine reductase 1.